Here is a 191-residue protein sequence, read N- to C-terminus: GTP-binding protein CIN4 (191 aa).

Residues 23–30 (GLDNSGKS), 69–73 (DIGGQ), and 131–134 (NKID) contribute to the GTP site.

In terms of biological role, implicated in yeast microtubule function. In Saccharomyces cerevisiae (strain ATCC 204508 / S288c) (Baker's yeast), this protein is GTP-binding protein CIN4 (CIN4).